The primary structure comprises 252 residues: Imidazole glycerol phosphate synthase subunit HisF (252 aa).

Active-site residues include aspartate 11 and aspartate 130.

It belongs to the HisA/HisF family. In terms of assembly, heterodimer of HisH and HisF.

It localises to the cytoplasm. It catalyses the reaction 5-[(5-phospho-1-deoxy-D-ribulos-1-ylimino)methylamino]-1-(5-phospho-beta-D-ribosyl)imidazole-4-carboxamide + L-glutamine = D-erythro-1-(imidazol-4-yl)glycerol 3-phosphate + 5-amino-1-(5-phospho-beta-D-ribosyl)imidazole-4-carboxamide + L-glutamate + H(+). It functions in the pathway amino-acid biosynthesis; L-histidine biosynthesis; L-histidine from 5-phospho-alpha-D-ribose 1-diphosphate: step 5/9. Functionally, IGPS catalyzes the conversion of PRFAR and glutamine to IGP, AICAR and glutamate. The HisF subunit catalyzes the cyclization activity that produces IGP and AICAR from PRFAR using the ammonia provided by the HisH subunit. The polypeptide is Imidazole glycerol phosphate synthase subunit HisF (Azobacteroides pseudotrichonymphae genomovar. CFP2).